The primary structure comprises 284 residues: 2-dehydro-3-deoxyphosphooctonate aldolase (284 aa).

Belongs to the KdsA family.

The protein localises to the cytoplasm. It catalyses the reaction D-arabinose 5-phosphate + phosphoenolpyruvate + H2O = 3-deoxy-alpha-D-manno-2-octulosonate-8-phosphate + phosphate. Its pathway is carbohydrate biosynthesis; 3-deoxy-D-manno-octulosonate biosynthesis; 3-deoxy-D-manno-octulosonate from D-ribulose 5-phosphate: step 2/3. It functions in the pathway bacterial outer membrane biogenesis; lipopolysaccharide biosynthesis. This chain is 2-dehydro-3-deoxyphosphooctonate aldolase, found in Pseudoalteromonas translucida (strain TAC 125).